The sequence spans 102 residues: Small ribosomal subunit protein uS10 (102 aa).

Belongs to the universal ribosomal protein uS10 family. Part of the 30S ribosomal subunit.

Functionally, involved in the binding of tRNA to the ribosomes. In Staphylococcus haemolyticus (strain JCSC1435), this protein is Small ribosomal subunit protein uS10.